The following is a 37-amino-acid chain: Neuropeptide Y1-like conopeptide (37 aa).

Position 37 is a phenylalanine amide (F37).

It belongs to the NPY family. In terms of tissue distribution, expressed by the venom duct.

The protein resides in the secreted. Its function is as follows. Causes hyperactivity such as jumping, rapid circling and tail flicking, when intraventricularly injected into mice brain. The polypeptide is Neuropeptide Y1-like conopeptide (Conus betulinus (Beech cone)).